The sequence spans 545 residues: Carboxypeptidase Y homolog A (545 aa).

Positions 1 to 18 (MKSSLALALLVGGAIASG) are cleaved as a signal peptide. Positions 19-125 (PQQQVLREPV…RLDTYDLRVK (107 aa)) are excised as a propeptide. 5 disulfide bridges follow: Cys179-Cys418, Cys313-Cys327, Cys337-Cys360, Cys344-Cys353, and Cys382-Cys388. Asn210 carries N-linked (GlcNAc...) asparagine glycosylation. Ser266 is a catalytic residue. Asp457 is a catalytic residue. N-linked (GlcNAc...) asparagine glycosylation is found at Asn487 and Asn507. Residue His518 is part of the active site.

Belongs to the peptidase S10 family.

Its subcellular location is the vacuole. The catalysed reaction is Release of a C-terminal amino acid with broad specificity.. In terms of biological role, vacuolar carboxypeptidase involved in degradation of small peptides. Digests preferentially peptides containing an aliphatic or hydrophobic residue in P1' position, as well as methionine, leucine or phenylalanine in P1 position of ester substrate. The chain is Carboxypeptidase Y homolog A (CPYA) from Ajellomyces capsulatus (strain NAm1 / WU24) (Darling's disease fungus).